The chain runs to 75 residues: AFSGILAEADIAAALKACEAADSFNYKAFFAKKAFFVIDQDKSGFIEEDELKLFLQVFSAGARALTDAETKAFLK.

Residue A1 is modified to N-acetylalanine. Positions 26 to 61 (YKAFFAKKAFFVIDQDKSGFIEEDELKLFLQVFSAG) constitute an EF-hand domain. Ca(2+)-binding residues include D39, D41, S43, F45, E47, and E50.

The protein belongs to the parvalbumin family.

In muscle, parvalbumin is thought to be involved in relaxation after contraction. It binds two calcium ions. The protein is Parvalbumin beta 3 of Merluccius gayi (South Pacific hake).